We begin with the raw amino-acid sequence, 385 residues long: Guanine nucleotide-binding protein alpha-5 subunit (385 aa).

Residue Gly2 is the site of N-myristoyl glycine attachment. Residue Cys6 is the site of S-palmitoyl cysteine attachment. One can recognise a G-alpha domain in the interval 32–385; it reads RKIKMLLLGI…NKNIETLSLE (354 aa). The interval 35–48 is G1 motif; the sequence is KMLLLGISDSGKST. Residues 40–47, 174–180, 199–203, 298–301, and Ala357 contribute to the GTP site; these read GISDSGKS, IHMRQTT, DVGGQ, and NKID. Ser47 and Thr180 together coordinate Mg(2+). The interval 172–180 is G2 motif; the sequence is DLIHMRQTT. The segment at 195–204 is G3 motif; the sequence is IRLIDVGGQK. The tract at residues 294–301 is G4 motif; it reads MLFLNKID. The segment at 355–360 is G5 motif; it reads TQATIT.

This sequence belongs to the G-alpha family. G proteins are composed of 3 units; alpha, beta and gamma. The alpha chain contains the guanine nucleotide binding site.

Guanine nucleotide-binding proteins (G proteins) are involved as modulators or transducers in various transmembrane signaling systems. The polypeptide is Guanine nucleotide-binding protein alpha-5 subunit (gpa-5) (Caenorhabditis briggsae).